Consider the following 423-residue polypeptide: Glucose-1-phosphate adenylyltransferase (423 aa).

Alpha-D-glucose 1-phosphate is bound by residues Y108, G173, 188 to 189 (EK), and S207.

Belongs to the bacterial/plant glucose-1-phosphate adenylyltransferase family. Homotetramer.

It catalyses the reaction alpha-D-glucose 1-phosphate + ATP + H(+) = ADP-alpha-D-glucose + diphosphate. It participates in glycan biosynthesis; glycogen biosynthesis. Functionally, involved in the biosynthesis of ADP-glucose, a building block required for the elongation reactions to produce glycogen. Catalyzes the reaction between ATP and alpha-D-glucose 1-phosphate (G1P) to produce pyrophosphate and ADP-Glc. The sequence is that of Glucose-1-phosphate adenylyltransferase from Francisella tularensis subsp. tularensis (strain WY96-3418).